A 126-amino-acid chain; its full sequence is MKANNAETPDSSNAADTFKWLAAFVLAAAAVVGNYLYGEMSVVVRAAGVVVLIAAALGVAATTTKGKAAISFAKESRMEVRKVVWPTRQETMQTTLIVLAVSIVMALVLWGIDGIMVRLVALATGV.

The next 3 membrane-spanning stretches (helical) occupy residues 20-40 (WLAA…YGEM), 42-62 (VVVR…VAAT), and 97-117 (IVLA…GIMV).

The protein belongs to the SecE/SEC61-gamma family. As to quaternary structure, component of the Sec protein translocase complex. Heterotrimer consisting of SecY, SecE and SecG subunits. The heterotrimers can form oligomers, although 1 heterotrimer is thought to be able to translocate proteins. Interacts with the ribosome. Interacts with SecDF, and other proteins may be involved. Interacts with SecA.

It localises to the cell inner membrane. Functionally, essential subunit of the Sec protein translocation channel SecYEG. Clamps together the 2 halves of SecY. May contact the channel plug during translocation. This chain is Protein translocase subunit SecE, found in Vibrio alginolyticus.